The chain runs to 562 residues: Potassium-transporting ATPase potassium-binding subunit (562 aa).

The next 12 membrane-spanning stretches (helical) occupy residues 6-26 (FLLI…LGGF), 62-82 (YALA…VLLM), 132-152 (GLTV…FALI), 175-195 (LYVL…QGVL), 253-273 (FVQM…FGQV), 283-303 (LIWA…YAEL), 327-347 (FGIL…CGAV), 356-376 (ALGG…FGGV), 379-399 (GLYG…LMIG), 416-436 (MTAL…ALAL), 483-503 (LLLA…VLAI), and 526-546 (LFIG…FIPA).

It belongs to the KdpA family. As to quaternary structure, the system is composed of three essential subunits: KdpA, KdpB and KdpC.

It is found in the cell inner membrane. Its function is as follows. Part of the high-affinity ATP-driven potassium transport (or Kdp) system, which catalyzes the hydrolysis of ATP coupled with the electrogenic transport of potassium into the cytoplasm. This subunit binds the periplasmic potassium ions and delivers the ions to the membrane domain of KdpB through an intramembrane tunnel. This Yersinia pseudotuberculosis serotype IB (strain PB1/+) protein is Potassium-transporting ATPase potassium-binding subunit.